The sequence spans 454 residues: Alpha-1,3-mannosyl-glycoprotein 4-beta-N-acetylglucosaminyltransferase C (454 aa).

Over Met-1 to Lys-6 the chain is Cytoplasmic. A helical; Signal-anchor for type II membrane protein transmembrane segment spans residues Lys-7–Tyr-24. Residues Met-25 to Ile-454 are Lumenal-facing. N-linked (GlcNAc...) asparagine glycosylation is found at Asn-58 and Asn-189.

The protein belongs to the glycosyltransferase 54 family. It depends on a divalent metal cation as a cofactor.

It is found in the golgi apparatus membrane. It carries out the reaction N(4)-{beta-D-GlcNAc-(1-&gt;2)-alpha-D-Man-(1-&gt;3)-[beta-D-GlcNAc-(1-&gt;2)-alpha-D-Man-(1-&gt;6)]-beta-D-Man-(1-&gt;4)-beta-D-GlcNAc-(1-&gt;4)-beta-D-GlcNAc}-L-asparaginyl-[protein] + UDP-N-acetyl-alpha-D-glucosamine = N(4)-{beta-D-GlcNAc-(1-&gt;2)-[beta-D-GlcNAc-(1-&gt;4)]-alpha-D-Man-(1-&gt;3)-[beta-D-GlcNAc-(1-&gt;2)-alpha-D-Man-(1-&gt;6)]-beta-D-Man-(1-&gt;4)-beta-D-GlcNAc-(1-&gt;4)-beta-D-GlcNAc}-L-asparaginyl-[protein] + UDP + H(+). The protein operates within protein modification; protein glycosylation. Functionally, glycosyltransferase that participates in the transfer of N-acetylglucosamine (GlcNAc) to the core mannose residues of N-linked glycans. Catalyzes the formation of the GlcNAcbeta1-4 branch on the GlcNAcbeta1-2Manalpha1-3 arm of the core structure of N-linked glycans. This chain is Alpha-1,3-mannosyl-glycoprotein 4-beta-N-acetylglucosaminyltransferase C (mgat4c), found in Danio rerio (Zebrafish).